The chain runs to 311 residues: tRNA N6-adenosine threonylcarbamoyltransferase (311 aa).

Fe cation contacts are provided by histidine 108 and histidine 112. Substrate is bound by residues 130 to 134, aspartate 163, glycine 176, aspartate 180, and asparagine 270; that span reads LVSGG. Aspartate 294 lines the Fe cation pocket.

Belongs to the KAE1 / TsaD family. Fe(2+) is required as a cofactor.

The protein resides in the cytoplasm. The enzyme catalyses L-threonylcarbamoyladenylate + adenosine(37) in tRNA = N(6)-L-threonylcarbamoyladenosine(37) in tRNA + AMP + H(+). Required for the formation of a threonylcarbamoyl group on adenosine at position 37 (t(6)A37) in tRNAs that read codons beginning with adenine. Is involved in the transfer of the threonylcarbamoyl moiety of threonylcarbamoyl-AMP (TC-AMP) to the N6 group of A37, together with TsaE and TsaB. TsaD likely plays a direct catalytic role in this reaction. The polypeptide is tRNA N6-adenosine threonylcarbamoyltransferase (Metamycoplasma arthritidis (strain 158L3-1) (Mycoplasma arthritidis)).